The primary structure comprises 653 residues: Choline transporter-like protein 1 (653 aa).

Gly-2 carries the N-myristoyl glycine lipid modification. The Cytoplasmic portion of the chain corresponds to 2-29 (GCCSSASAAQSSKREWKPLEDRSCTDIP). Residues 30-50 (WLLLFVLFCIGMGFICGFSVA) form a helical membrane-spanning segment. Residues 51 to 211 (TGAAARLVSG…RLISGVMTSK (161 aa)) lie on the Mitochondrial intermembrane side of the membrane. Residues 212–232 (EIILGLCLLSLVLSMILMVII) traverse the membrane as a helical segment. Residues 233 to 237 (RYISR) lie on the Cytoplasmic side of the membrane. The chain crosses the membrane as a helical span at residues 238–258 (VLVWILTVLVILGSLGGTGVL). Residues 259 to 287 (WWLYAKQRRSPKEAVIPEQLQIAEDNLRA) are Mitochondrial intermembrane-facing. Residues 288 to 308 (LLIYAISATVFTVILFLIMLV) traverse the membrane as a helical segment. Residues 309 to 314 (MRKRVA) are Cytoplasmic-facing. A helical transmembrane segment spans residues 315 to 335 (LTIALFHVAGKVFIHLPLLVF). The Mitochondrial intermembrane segment spans residues 336–337 (QP). A helical transmembrane segment spans residues 338 to 358 (FWTFFALVLFWAYWIMTLLFL). At 359-379 (GTTGSAVQNEQGFVEYKISGP) the chain is on the cytoplasmic side. A helical transmembrane segment spans residues 380 to 400 (LQYMWWYHVVGLIWISEFILA). The Mitochondrial intermembrane portion of the chain corresponds to 401-536 (CQQMTVAGAV…RVAAINTVGD (136 aa)). A helical membrane pass occupies residues 537 to 557 (FMLFLGKVLIVCSTGLAGIML). The Cytoplasmic segment spans residues 558-565 (LNYQQDYT). The chain crosses the membrane as a helical span at residues 566–586 (VWVLPLIIVCLFAFLVAHCFL). Residues 587–653 (SIYEMVVDVL…RELKPMLRKR (67 aa)) lie on the Mitochondrial intermembrane side of the membrane.

This sequence belongs to the CTL (choline transporter-like) family. In terms of tissue distribution, specifically abundant in skeletal muscle (at protein level).

It is found in the cell membrane. Its subcellular location is the mitochondrion outer membrane. The enzyme catalyses choline(out) + n H(+)(in) = choline(in) + n H(+)(out). The catalysed reaction is ethanolamine(out) + n H(+)(in) = ethanolamine(in) + n H(+)(out). Its function is as follows. Choline/H+ antiporter. Also acts as a high-affinity ethanolamine/H+ antiporter, regulating the supply of extracellular ethanolamine (Etn) for the CDP-Etn pathway, redistribute intracellular Etn and balance the CDP-Cho and CDP-Etn arms of the Kennedy pathway. Involved in membrane synthesis and myelin production. The chain is Choline transporter-like protein 1 (Slc44a1) from Mus musculus (Mouse).